The primary structure comprises 227 residues: Probable minor pilin MMP0600 (227 aa).

Positions Met-1–Gly-7 are excised as a propeptide. The QXSXEXXXL motif lies at Gln-8–Leu-16.

Post-translationally, the N-terminus is probably cleaved by the prepilin peptidase EppA, which recognizes the class III signal sequence.

It localises to the secreted. The protein localises to the cell surface. The protein resides in the fimbrium. This Methanococcus maripaludis (strain DSM 14266 / JCM 13030 / NBRC 101832 / S2 / LL) protein is Probable minor pilin MMP0600.